The sequence spans 100 residues: Small ubiquitin-related modifier 1 (100 aa).

The Ubiquitin-like domain maps to 19 to 96 (EYIKLKVIGQ…IEVYQEQTGG (78 aa)). A Glycyl lysine isopeptide (Gly-Lys) (interchain with K-? in acceptor proteins) cross-link involves residue glycine 96. Positions 97–100 (CRND) are excised as a propeptide.

It belongs to the ubiquitin family. SUMO subfamily. As to quaternary structure, interacts with sae2, ube2i, ranbp2, pias1 and pias2. Covalently attached to a number of proteins. In terms of processing, cleavage of precursor form by a sentrin-specific protease is necessary for function.

Its subcellular location is the nucleus membrane. It is found in the nucleus speckle. It localises to the cytoplasm. The protein resides in the nucleus. The protein localises to the PML body. Its subcellular location is the cell membrane. Functionally, ubiquitin-like protein that can be covalently attached to proteins as a monomer or a lysine-linked polymer. Covalent attachment via an isopeptide bond to its substrates requires prior activation by the E1 complex sae1-sae2 and linkage to the E2 enzyme ube2i. This post-translational modification on lysine residues of proteins plays a crucial role in a number of cellular processes such as nuclear transport, DNA replication and repair, mitosis and signal transduction. Polymeric sumo1 chains are also susceptible to polyubiquitination which functions as a signal for proteasomal degradation of modified proteins. This chain is Small ubiquitin-related modifier 1 (sumo1), found in Danio rerio (Zebrafish).